The primary structure comprises 492 residues: MTDLHRLSIRELAEGLSQAKFSSRELTEHYLKRIAKIDPQVKSYVTVTSEQALREADAADAALKAGNATALTGIPLAHKDIFCTKGIKTTAGSKMLDNFISPYDATVVEKTKAAGLVTLGKVNMDEFAMGSTSESSYVGATSNPWALDHVPGGSSGGSAAAVAADLAPFATGTDTGGSIRQPASFCGLTGLKPTYGRVSRFGIIAYASSLDQAGPMARSAEDCAYLMNVIAGHDAKDSTSVKKEVDDYVANLNGTSVKGLRIGIPKQYFNVAGLDADVKARVEESLKKLEEMGATLVEIDLNMTEAYVPTYYLIAPAEASSNLSRYDGVRYGYRCENPADLMDLYKRSRSEGFGPEIQRRILIGTYALSAGYYDAYYVKAQKVRRLIQQDFLKAFENVDVIAAPAAPTTAYKIGASLDPVEMYLGDIYTIAVNLAGLPAINAPVGFDKDNLPVGLQLIGNYWSESQLLSIVHQYQQNTDWHTKRAAIAEENA.

Catalysis depends on charge relay system residues Lys79 and Ser154. Ser178 functions as the Acyl-ester intermediate in the catalytic mechanism.

The protein belongs to the amidase family. GatA subfamily. Heterotrimer of A, B and C subunits.

It carries out the reaction L-glutamyl-tRNA(Gln) + L-glutamine + ATP + H2O = L-glutaminyl-tRNA(Gln) + L-glutamate + ADP + phosphate + H(+). In terms of biological role, allows the formation of correctly charged Gln-tRNA(Gln) through the transamidation of misacylated Glu-tRNA(Gln) in organisms which lack glutaminyl-tRNA synthetase. The reaction takes place in the presence of glutamine and ATP through an activated gamma-phospho-Glu-tRNA(Gln). This is Glutamyl-tRNA(Gln) amidotransferase subunit A from Acinetobacter baumannii (strain ATCC 17978 / DSM 105126 / CIP 53.77 / LMG 1025 / NCDC KC755 / 5377).